Here is a 642-residue protein sequence, read N- to C-terminus: Uromodulin (642 aa).

The N-terminal stretch at Met-1–Ile-26 is a signal peptide. The 33-residue stretch at Arg-32 to Glu-64 folds into the EGF-like 1 domain. Cystine bridges form between Cys-34/Cys-43, Cys-37/Cys-52, Cys-54/Cys-65, Cys-71/Cys-85, Cys-79/Cys-94, Cys-96/Cys-108, Cys-114/Cys-128, Cys-122/Cys-137, Cys-139/Cys-150, Cys-152/Cys-163, Cys-157/Cys-172, Cys-176/Cys-269, Cys-197/Cys-284, Cys-219/Cys-257, Cys-225/Cys-289, Cys-250/Cys-258, Cys-299/Cys-308, Cys-302/Cys-317, Cys-319/Cys-348, Cys-336/Cys-426, and Cys-367/Cys-390. N-linked (GlcNAc...) asparagine glycosylation is present at Asn-40. An EGF-like 2; calcium-binding domain is found at Asp-67–Ile-109. Residue Asn-78 is glycosylated (N-linked (GlcNAc...) asparagine). One can recognise an EGF-like 3; calcium-binding domain in the interval Asp-110 to Glu-151. Residue Asn-134 is glycosylated (N-linked (GlcNAc...) asparagine). The tract at residues Cys-152 to Ala-173 is beta hairpin. Residues Asp-174 to Thr-293 are D10C. 2 N-linked (GlcNAc...) asparagine glycosylation sites follow: Asn-234 and Asn-246. The N-linked (GlcNAc...) asparagine glycan is linked to Asn-277. The 32-residue stretch at Ser-294–Val-325 folds into the EGF-like 4 domain. Residue Asn-324 is glycosylated (N-linked (GlcNAc...) asparagine). A ZP-N region spans residues Glu-335–Leu-430. Positions Glu-335–Ser-590 constitute a ZP domain. N-linked (GlcNAc...) asparagine glycans are attached at residues Asn-397 and Asn-448. Positions Asp-431–Thr-454 are flexible ZP-N/ZP-C linker; important for secretion and polymerization into filaments. Residues Gly-455–Gln-465 form an internal hydrophobic patch (IHP) region. The tract at residues Gly-455–Ser-590 is ZP-C. 3 cysteine pairs are disulfide-bonded: Cys-507/Cys-567, Cys-528/Cys-583, and Cys-572/Cys-579. Asn-514 carries an N-linked (GlcNAc...) asparagine glycan. An essential for cleavage by HPN region spans residues Arg-587–Ser-590. The tract at residues Val-599–Arg-607 is external hydrophobic patch (EHP); regulates polymerization into filaments. Ser-620 carries GPI-anchor amidated serine lipidation. Residues Ser-621–Gln-642 constitute a propeptide, removed in mature form.

Homodimer that then polymerizes into long filaments. The filaments can additionally assemble laterally to form a sheet. The filaments consist of a zigzag-shaped backbone with laterally protruding arms which interact with bacterial adhesin fimH. Two fimH molecules can bind to a single UMOD monomer. In terms of processing, N-glycosylated. Proteolytically cleaved at a conserved C-terminal proteolytic cleavage site to generate the secreted form found in urine. This cleavage is catalyzed by HPN. In terms of tissue distribution, detected in kidney and pancreas.

The protein localises to the apical cell membrane. It is found in the basolateral cell membrane. Its subcellular location is the cell projection. The protein resides in the cilium membrane. It localises to the secreted. Its function is as follows. Functions in biogenesis and organization of the apical membrane of epithelial cells of the thick ascending limb of Henle's loop (TALH), where it promotes formation of complex filamentous gel-like structure that may play a role in the water barrier permeability. May serve as a receptor for binding and endocytosis of cytokines (IL-1, IL-2) and TNF. Facilitates neutrophil migration across renal epithelia. In the urine, may contribute to colloid osmotic pressure, retards passage of positively charged electrolytes, and inhibits formation of liquid containing supersaturated salts and subsequent formation of salt crystals. Protects against urinary tract infections by binding to type 1 fimbriated E.coli. Binds to bacterial adhesin fimH which mediates the stable formation of bacterial aggregates, prevents the binding of E.coli to uroplakins UPK1A and UPK1B which act as urothelial receptors for type I fimbriae, and allows for pathogen clearance through micturation. Also promotes aggregation of other bacteria including K.pneumoniae, P.aeruginosa and S.mitis and so may also protect against other uropathogens. The sequence is that of Uromodulin (UMOD) from Canis lupus familiaris (Dog).